Reading from the N-terminus, the 273-residue chain is Large ribosomal subunit protein uL2 (273 aa).

Residues 222-273 (GMAMNPVDHPHGGGEGRNKGIQPVSPWGTPAKGYRTRSNKRTDKYIVRRRNK) are disordered. The segment covering 229-239 (DHPHGGGEGRN) has biased composition (basic and acidic residues).

The protein belongs to the universal ribosomal protein uL2 family. As to quaternary structure, part of the 50S ribosomal subunit. Forms a bridge to the 30S subunit in the 70S ribosome.

Functionally, one of the primary rRNA binding proteins. Required for association of the 30S and 50S subunits to form the 70S ribosome, for tRNA binding and peptide bond formation. It has been suggested to have peptidyltransferase activity; this is somewhat controversial. Makes several contacts with the 16S rRNA in the 70S ribosome. This Tolumonas auensis (strain DSM 9187 / NBRC 110442 / TA 4) protein is Large ribosomal subunit protein uL2.